Reading from the N-terminus, the 134-residue chain is Small ribosomal subunit protein uS9 (134 aa).

The segment at 97–134 (ENRQDLKSCGFLTRDPRKKERKKYGHKKARKSFQFSKR) is disordered. Positions 115–134 (KERKKYGHKKARKSFQFSKR) are enriched in basic residues.

Belongs to the universal ribosomal protein uS9 family.

The polypeptide is Small ribosomal subunit protein uS9 (rpsI) (Chlamydia pneumoniae (Chlamydophila pneumoniae)).